The chain runs to 280 residues: Probable 6-phosphogluconolactonase 2 (280 aa).

It belongs to the glucosamine/galactosamine-6-phosphate isomerase family. 6-phosphogluconolactonase subfamily.

It catalyses the reaction 6-phospho-D-glucono-1,5-lactone + H2O = 6-phospho-D-gluconate + H(+). It functions in the pathway carbohydrate degradation; pentose phosphate pathway; D-ribulose 5-phosphate from D-glucose 6-phosphate (oxidative stage): step 2/3. Hydrolysis of 6-phosphogluconolactone to 6-phosphogluconate. The sequence is that of Probable 6-phosphogluconolactonase 2 from Oryza sativa subsp. indica (Rice).